The sequence spans 146 residues: MIF-like protein mif-3 (146 aa).

The protein belongs to the MIF family.

The protein is MIF-like protein mif-3 (mif-3) of Caenorhabditis elegans.